Consider the following 515-residue polypeptide: ATP synthase subunit alpha (515 aa).

171-178 provides a ligand contact to ATP; that stretch reads GDRQTGKT.

The protein belongs to the ATPase alpha/beta chains family. F-type ATPases have 2 components, CF(1) - the catalytic core - and CF(0) - the membrane proton channel. CF(1) has five subunits: alpha(3), beta(3), gamma(1), delta(1), epsilon(1). CF(0) has three main subunits: a(1), b(2) and c(9-12). The alpha and beta chains form an alternating ring which encloses part of the gamma chain. CF(1) is attached to CF(0) by a central stalk formed by the gamma and epsilon chains, while a peripheral stalk is formed by the delta and b chains.

The protein localises to the cell inner membrane. The enzyme catalyses ATP + H2O + 4 H(+)(in) = ADP + phosphate + 5 H(+)(out). Functionally, produces ATP from ADP in the presence of a proton gradient across the membrane. The alpha chain is a regulatory subunit. The sequence is that of ATP synthase subunit alpha from Coxiella burnetii (strain CbuK_Q154) (Coxiella burnetii (strain Q154)).